We begin with the raw amino-acid sequence, 742 residues long: Collectin-12 (742 aa).

Over 1–37 (MKDDFAEEEEVQSFGYKRFGIQEGTQCTKCKNNWALK) the chain is Cytoplasmic. The chain crosses the membrane as a helical; Signal-anchor for type II membrane protein span at residues 38-58 (FSIVLLYILCALLTITVAILG). At 59–742 (YKVVEKMDNV…EREAVPSSIL (684 aa)) the chain is on the extracellular side. N-linked (GlcNAc...) asparagine glycosylation is present at N67. Positions 73–142 (ETSHQTYDNK…KDTLEKLQAN (70 aa)) form a coiled coil. N-linked (GlcNAc...) asparagine glycosylation is found at N159 and N168. Residues 205–254 (NLNNLNLTQVQQRNLISNLQQSVDDTSLAIQRIKNDFQNLQQVFLQAKKD) adopt a coiled-coil conformation. N-linked (GlcNAc...) asparagine glycosylation occurs at N271. A disordered region spans residues 439-608 (TILQGPPGPR…TPASEVNGCP (170 aa)). Collagen-like domains are found at residues 452 to 511 (GDRG…KGSR) and 527 to 586 (GPPG…PGPS). Positions 501-514 (SKGSQGPKGSRGSP) are enriched in low complexity. The segment covering 516–532 (KPGPQGPSGDPGPPGPP) has biased composition (pro residues). Residues 534-556 (KDGLPGPQGPPGFQGLQGTVGEP) are compositionally biased toward low complexity. Positions 571 to 585 (PGMPGPKGPPGPPGP) are enriched in pro residues. Intrachain disulfides connect C607-C618, C635-C730, and C708-C722. Positions 614–731 (FTDKCYYFSL…CDEINNFICE (118 aa)) constitute a C-type lectin domain. Ca(2+)-binding residues include F644, N646, E650, D670, and E674. A carbohydrate contacts are provided by K691, Q694, and D696. Q694, D696, N697, E706, D707, N718, D719, and E731 together coordinate Ca(2+). E706 is a binding site for a carbohydrate. 2 residues coordinate a carbohydrate: N718 and D719.

As to quaternary structure, the extracellular domain forms a stable trimer. The extracellular domain interacts with fibrillar amyloid-beta peptide. Expressed in vascular endothelial cells in the heart, in perivascular macrophage and smooth muscle cells. Expressed in plaques-surrounding reactive astrocytes located in cerebral cortex and hippocampus and in leptomeningeal vessels showing characteristics of cerebral amyloid angiopathy (CAA) in a double transgenic mouse model of Alzheimer disease (at protein level). Strongly expressed in lung. Moderately expressed in heart, skeletal muscle, spleen, liver, brain, colon, testis, stomach and kidney. Expressed in neonatal astrocytes. Expressed in reactive astrocytes and vascular/perivascular cells in the brain of a double transgenic mouse model of Alzheimer disease.

It localises to the membrane. Scavenger receptor that displays several functions associated with host defense. Promotes binding and phagocytosis of Gram-positive, Gram-negative bacteria and yeast. Also binds to sialyl Lewis X or a trisaccharide and asialo-orosomucoid (ASOR). Mediates the recognition, internalization and degradation of oxidatively modified low density lipoprotein (oxLDL) by vascular endothelial cells. Binds to several carbohydrates including Gal-type ligands, D-galactose, L- and D-fucose, GalNAc, T and Tn antigens in a calcium-dependent manner and internalizes specifically GalNAc in nurse-like cells. This chain is Collectin-12 (Colec12), found in Mus musculus (Mouse).